A 215-amino-acid polypeptide reads, in one-letter code: Thiamine-phosphate synthase (215 aa).

Residues 42–46 (QYREK) and Asp-77 contribute to the 4-amino-2-methyl-5-(diphosphooxymethyl)pyrimidine site. 2 residues coordinate Mg(2+): Asp-78 and Asp-97. Residue Ser-116 participates in 4-amino-2-methyl-5-(diphosphooxymethyl)pyrimidine binding. 143–145 (TKS) contributes to the 2-[(2R,5Z)-2-carboxy-4-methylthiazol-5(2H)-ylidene]ethyl phosphate binding site. Lys-146 serves as a coordination point for 4-amino-2-methyl-5-(diphosphooxymethyl)pyrimidine. 2-[(2R,5Z)-2-carboxy-4-methylthiazol-5(2H)-ylidene]ethyl phosphate contacts are provided by residues Gly-174 and 194–195 (IS).

This sequence belongs to the thiamine-phosphate synthase family. It depends on Mg(2+) as a cofactor.

It catalyses the reaction 2-[(2R,5Z)-2-carboxy-4-methylthiazol-5(2H)-ylidene]ethyl phosphate + 4-amino-2-methyl-5-(diphosphooxymethyl)pyrimidine + 2 H(+) = thiamine phosphate + CO2 + diphosphate. The enzyme catalyses 2-(2-carboxy-4-methylthiazol-5-yl)ethyl phosphate + 4-amino-2-methyl-5-(diphosphooxymethyl)pyrimidine + 2 H(+) = thiamine phosphate + CO2 + diphosphate. It carries out the reaction 4-methyl-5-(2-phosphooxyethyl)-thiazole + 4-amino-2-methyl-5-(diphosphooxymethyl)pyrimidine + H(+) = thiamine phosphate + diphosphate. It participates in cofactor biosynthesis; thiamine diphosphate biosynthesis; thiamine phosphate from 4-amino-2-methyl-5-diphosphomethylpyrimidine and 4-methyl-5-(2-phosphoethyl)-thiazole: step 1/1. Functionally, condenses 4-methyl-5-(beta-hydroxyethyl)thiazole monophosphate (THZ-P) and 2-methyl-4-amino-5-hydroxymethyl pyrimidine pyrophosphate (HMP-PP) to form thiamine monophosphate (TMP). The sequence is that of Thiamine-phosphate synthase from Limosilactobacillus reuteri (strain DSM 20016) (Lactobacillus reuteri).